A 228-amino-acid chain; its full sequence is MLHVEMLTLLFLVLWMCVFSQDPGSKVVADRYAVYWNSSNPRFQRGDYHIDVCINDYLDVFCPHYEDSVPEDKTERYVLYMVNFDGYSACDHTSKGFKRWECNRPHSPNGPLKFSEKFQLFTPFSLGFEFRPGREYFYISSAIPDNGRRSCLKLKVFVRPTNSCMKTIGVRDRVFDVNDKVENSLEPADDTVHESAEPSRGENAAQTPRIPSRLLAILLFLLAMLLTL.

The signal sequence occupies residues 1-20 (MLHVEMLTLLFLVLWMCVFS). The Ephrin RBD domain maps to 29–162 (ADRYAVYWNS…KLKVFVRPTN (134 aa)). N-linked (GlcNAc...) asparagine glycosylation occurs at asparagine 37. 2 disulfide bridges follow: cysteine 62–cysteine 102 and cysteine 90–cysteine 151. A disordered region spans residues 186–205 (EPADDTVHESAEPSRGENAA). Positions 190–200 (DTVHESAEPSR) are enriched in basic and acidic residues. Asparagine 203 carries GPI-anchor amidated asparagine lipidation. A propeptide spans 204–228 (AAQTPRIPSRLLAILLFLLAMLLTL) (removed in mature form).

Belongs to the ephrin family. Binds to the receptor tyrosine kinases EPHA2, EPHA3, EPHB1 and EPHB2. Interacts with EPHA8; activates EPHA8. Forms a ternary EFNA5-EPHA3-ADAM10 complex mediating EFNA5 extracellular domain shedding by ADAM10 which regulates the EFNA5-EPHA3 complex internalization and function. In terms of tissue distribution, expressed in brain, heart, placenta and lung.

Its subcellular location is the cell membrane. It is found in the membrane. The protein localises to the caveola. Functionally, cell surface GPI-bound ligand for Eph receptors, a family of receptor tyrosine kinases which are crucial for migration, repulsion and adhesion during neuronal, vascular and epithelial development. Binds promiscuously Eph receptors residing on adjacent cells, leading to contact-dependent bidirectional signaling into neighboring cells. The signaling pathway downstream of the receptor is referred to as forward signaling while the signaling pathway downstream of the ephrin ligand is referred to as reverse signaling. Induces compartmentalized signaling within a caveolae-like membrane microdomain when bound to the extracellular domain of its cognate receptor. This signaling event requires the activity of the Fyn tyrosine kinase. Activates the EPHA3 receptor to regulate cell-cell adhesion and cytoskeletal organization. With the receptor EPHA2 may regulate lens fiber cells shape and interactions and be important for lens transparency maintenance. May function actively to stimulate axon fasciculation. The interaction of EFNA5 with EPHA5 also mediates communication between pancreatic islet cells to regulate glucose-stimulated insulin secretion. Cognate/functional ligand for EPHA7, their interaction regulates brain development modulating cell-cell adhesion and repulsion. The sequence is that of Ephrin-A5 (Efna5) from Rattus norvegicus (Rat).